A 365-amino-acid polypeptide reads, in one-letter code: Palmitoyltransferase ZDHHC20 (365 aa).

Residues 1-14 (MAPWTLWRCCQRVV) are Cytoplasmic-facing. A helical membrane pass occupies residues 15-35 (GWVPVLFITFVVVWSYYAYVV). Residues 36 to 53 (ELCVFTIFGNEENGKTVV) lie on the Lumenal side of the membrane. A helical transmembrane segment spans residues 54–74 (YLVAFHLFFVMFVWSYWMTIF). Residues 75–169 (TSPASPSKEF…NNCVGFSNYK (95 aa)) lie on the Cytoplasmic side of the membrane. The region spanning 126-176 (RYCEKCQLIKPDRAHHCSACDSCILKMDHHCPWVNNCVGFSNYKFFLLFLL) is the DHHC domain. C128 and C131 together coordinate Zn(2+). Residues K135 and 140–143 (HHCS) contribute to the substrate site. Positions 141, 142, 145, 148, and 155 each coordinate Zn(2+). Catalysis depends on C156, which acts as the S-palmitoyl cysteine intermediate. C162 provides a ligand contact to Zn(2+). The helical transmembrane segment at 170–190 (FFLLFLLYSLLYCLFVAATVL) threads the bilayer. Residues 191-207 (EYFIKFWTNELTDTRAK) are Lumenal-facing. A helical transmembrane segment spans residues 208–231 (FHVLFLFFVSAMFFISVLSLFSYH). The Cytoplasmic segment spans residues 232-365 (CWLVGKNRTT…NNHVTVAIEN (134 aa)). 3 positions are modified to phosphoserine: S305, S330, and S339.

This sequence belongs to the DHHC palmitoyltransferase family. Autopalmitoylated (in vitro).

It is found in the golgi apparatus membrane. It localises to the cell membrane. Its subcellular location is the cytoplasm. The protein localises to the perinuclear region. The protein resides in the endoplasmic reticulum membrane. It is found in the endoplasmic reticulum-Golgi intermediate compartment membrane. It catalyses the reaction L-cysteinyl-[protein] + hexadecanoyl-CoA = S-hexadecanoyl-L-cysteinyl-[protein] + CoA. The enzyme catalyses L-cysteinyl-[protein] + tetradecanoyl-CoA = S-tetradecanoyl-L-cysteinyl-[protein] + CoA. It carries out the reaction L-cysteinyl-[protein] + octadecanoyl-CoA = S-octadecanoyl-L-cysteinyl-[protein] + CoA. Palmitoyltransferase that could catalyze the addition of palmitate onto various protein substrates. Catalyzes palmitoylation of Cys residues in the cytoplasmic C-terminus of EGFR, and modulates the duration of EGFR signaling by modulating palmitoylation-dependent EGFR internalization and degradation. Has a preference for acyl-CoA with C16 fatty acid chains. Can also utilize acyl-CoA with C14 and C18 fatty acid chains. May palmitoylate CALHM1 subunit of gustatory voltage-gated ion channels and modulate channel gating and kinetics. In terms of biological role, (Microbial infection) Dominant palmitoyltransferase responsible for lipidation of SARS coronavirus-2/SARS-CoV-2 spike protein. Through a sequential action with ZDHHC9, rapidly and efficiently palmitoylates spike protein following its synthesis in the endoplasmic reticulum (ER). In the infected cell, promotes spike biogenesis by protecting it from premature ER degradation, increases half-life and controls the lipid organization of its immediate membrane environment. Once the virus has formed, spike palmitoylation controls fusion with the target cell. The chain is Palmitoyltransferase ZDHHC20 from Homo sapiens (Human).